Here is a 110-residue protein sequence, read N- to C-terminus: Thiosulfate sulfurtransferase GlpE (110 aa).

A Rhodanese domain is found at 17 to 105 (KKEGAVVVDI…WRATYPAETA (89 aa)). Residue Cys-65 is the Cysteine persulfide intermediate of the active site.

It belongs to the GlpE family.

The protein resides in the cytoplasm. The catalysed reaction is thiosulfate + hydrogen cyanide = thiocyanate + sulfite + 2 H(+). It carries out the reaction thiosulfate + [thioredoxin]-dithiol = [thioredoxin]-disulfide + hydrogen sulfide + sulfite + 2 H(+). Transferase that catalyzes the transfer of sulfur from thiosulfate to thiophilic acceptors such as cyanide or dithiols. May function in a CysM-independent thiosulfate assimilation pathway by catalyzing the conversion of thiosulfate to sulfite, which can then be used for L-cysteine biosynthesis. The sequence is that of Thiosulfate sulfurtransferase GlpE from Pseudomonas putida (strain ATCC 700007 / DSM 6899 / JCM 31910 / BCRC 17059 / LMG 24140 / F1).